We begin with the raw amino-acid sequence, 337 residues long: Protein hairy (337 aa).

Positions 29-48 (KSDRRSNKPIMEKRRRARIN) are interaction with Topors. The 58-residue stretch at 31–88 (DRRSNKPIMEKRRRARINNCLNELKTLILDATKKDPARHSKLEKADILEKTVKHLQEL) folds into the bHLH domain. Residues 107–136 (FKAGFADCVNEVSRFPGIEPAQRRRLLQHL) enclose the Orange domain. Disordered stretches follow at residues 146–178 (ELHQ…SQQG) and 259–311 (MPQR…VIQR). The segment covering 263–301 (TASTGSASSHSSAGYESAPGSSSSCSYAPPSPANSSYEP) has biased composition (low complexity). The short motif at 334–337 (WRPW) is the WRPW motif element.

As to quaternary structure, transcription repression requires formation of a complex with a corepressor protein (Groucho). Interacts with gro (via WPRW motif) and Topors. Ubiquitinated by Topors.

It localises to the nucleus. Functionally, pair-rule protein that regulates embryonic segmentation and adult bristle patterning. Transcriptional repressor of genes that require a bHLH protein for their transcription (e.g. ftz). The polypeptide is Protein hairy (Drosophila melanogaster (Fruit fly)).